Here is a 449-residue protein sequence, read N- to C-terminus: UDP-N-acetylmuramoylalanine--D-glutamate ligase (449 aa).

Residue 118-124 (GSNGKTT) coordinates ATP.

Belongs to the MurCDEF family.

The protein localises to the cytoplasm. It carries out the reaction UDP-N-acetyl-alpha-D-muramoyl-L-alanine + D-glutamate + ATP = UDP-N-acetyl-alpha-D-muramoyl-L-alanyl-D-glutamate + ADP + phosphate + H(+). Its pathway is cell wall biogenesis; peptidoglycan biosynthesis. Functionally, cell wall formation. Catalyzes the addition of glutamate to the nucleotide precursor UDP-N-acetylmuramoyl-L-alanine (UMA). The polypeptide is UDP-N-acetylmuramoylalanine--D-glutamate ligase (Leuconostoc citreum (strain KM20)).